We begin with the raw amino-acid sequence, 344 residues long: 3-dehydroquinate synthase (344 aa).

NAD(+) is bound by residues 60 to 65 (DGEEYK), 94 to 98 (GVISD), 118 to 119 (TT), lysine 131, lysine 140, and 158 to 161 (FLNT). Zn(2+) is bound by residues glutamate 173, histidine 232, and histidine 249.

This sequence belongs to the sugar phosphate cyclases superfamily. Dehydroquinate synthase family. Co(2+) is required as a cofactor. The cofactor is Zn(2+). Requires NAD(+) as cofactor.

It is found in the cytoplasm. It catalyses the reaction 7-phospho-2-dehydro-3-deoxy-D-arabino-heptonate = 3-dehydroquinate + phosphate. The protein operates within metabolic intermediate biosynthesis; chorismate biosynthesis; chorismate from D-erythrose 4-phosphate and phosphoenolpyruvate: step 2/7. Its function is as follows. Catalyzes the conversion of 3-deoxy-D-arabino-heptulosonate 7-phosphate (DAHP) to dehydroquinate (DHQ). This is 3-dehydroquinate synthase from Campylobacter hominis (strain ATCC BAA-381 / DSM 21671 / CCUG 45161 / LMG 19568 / NCTC 13146 / CH001A).